Consider the following 200-residue polypeptide: Probable molybdenum cofactor guanylyltransferase (200 aa).

GTP is bound by residues 9–11 (LAG), Lys-21, Asp-69, and Asp-100. Mg(2+) is bound at residue Asp-100.

The protein belongs to the MobA family. It depends on Mg(2+) as a cofactor.

The protein localises to the cytoplasm. It catalyses the reaction Mo-molybdopterin + GTP + H(+) = Mo-molybdopterin guanine dinucleotide + diphosphate. In terms of biological role, transfers a GMP moiety from GTP to Mo-molybdopterin (Mo-MPT) cofactor (Moco or molybdenum cofactor) to form Mo-molybdopterin guanine dinucleotide (Mo-MGD) cofactor. This is Probable molybdenum cofactor guanylyltransferase from Bacillus mycoides (strain KBAB4) (Bacillus weihenstephanensis).